The sequence spans 498 residues: Archaemetzincin-1 (498 aa).

His-261 is a Zn(2+) binding site. Glu-262 serves as the catalytic Proton acceptor. Zn(2+)-binding residues include His-265, Cys-272, Cys-277, Cys-296, and Cys-299. Residues 332-381 form a disordered region; it reads QEAGEPSVWEDTPPASADSGMCCESDSEPGTSVSEPLTPDAGSHTFASGP.

Belongs to the peptidase M54 family. Requires Zn(2+) as cofactor.

In terms of biological role, probable zinc metalloprotease. The sequence is that of Archaemetzincin-1 (AMZ1) from Homo sapiens (Human).